The primary structure comprises 175 residues: Dof zinc finger protein DOF1.5 (175 aa).

Residues 29 to 57 (EEQQQQQQPELQATTAVRSPSSDLTAEKR) form a disordered region. Over residues 37 to 52 (PELQATTAVRSPSSDL) the composition is skewed to polar residues. The Dof-type zinc finger occupies 62 to 116 (IPCPRCKSMETKFCYFNNYNVNQPRHFCKGCQRYWTAGGALRNVPVGAGRRKSKP). Residues Cys64, Cys67, Cys89, and Cys92 each coordinate Zn(2+). The short motif at 162 to 168 (PVKRLRC) is the Nuclear localization signal element.

It localises to the nucleus. Functionally, transcription factor that binds specifically to a 5'-AA[AG]G-3' consensus core sequence. Acts as a negative regulator in the phytochrome-mediated light responses. Controls phyB-mediated end-of-day response and the phyA-mediated anthocyanin accumulation. Not involved in direct flowering time regulation. The sequence is that of Dof zinc finger protein DOF1.5 (DOF1.5) from Arabidopsis thaliana (Mouse-ear cress).